Here is a 146-residue protein sequence, read N- to C-terminus: MRLHELHPAPGSRPRATRVGRGIGSGLGKTSGRGHKGQKARSGGGVRRGFEGGQMPLTRRLPKRGFTNIFARKLVPINVGELERFEPETVVTPELLHDAGLVKQARDGVKILGDGELTKKLTVKVQAASRKAIEKIEAAGGKVEVM.

Residues methionine 1–threonine 58 are disordered. A compositionally biased stretch (gly residues) spans arginine 21–serine 31.

This sequence belongs to the universal ribosomal protein uL15 family. In terms of assembly, part of the 50S ribosomal subunit.

Functionally, binds to the 23S rRNA. This is Large ribosomal subunit protein uL15 from Moorella thermoacetica (strain ATCC 39073 / JCM 9320).